A 398-amino-acid polypeptide reads, in one-letter code: Acetate kinase (398 aa).

Asn-8 serves as a coordination point for Mg(2+). Lys-15 lines the ATP pocket. Arg-89 provides a ligand contact to substrate. The active-site Proton donor/acceptor is Asp-146. Residues 206-210 (HIGNG), 283-285 (DMR), and 331-335 (GMGEN) contribute to the ATP site. Glu-383 provides a ligand contact to Mg(2+).

This sequence belongs to the acetokinase family. In terms of assembly, homodimer. Requires Mg(2+) as cofactor. It depends on Mn(2+) as a cofactor.

It is found in the cytoplasm. The enzyme catalyses acetate + ATP = acetyl phosphate + ADP. The protein operates within metabolic intermediate biosynthesis; acetyl-CoA biosynthesis; acetyl-CoA from acetate: step 1/2. In terms of biological role, catalyzes the formation of acetyl phosphate from acetate and ATP. Can also catalyze the reverse reaction. This Streptococcus pyogenes serotype M49 (strain NZ131) protein is Acetate kinase.